A 455-amino-acid polypeptide reads, in one-letter code: Transcriptional regulatory protein FlbD (455 aa).

The 113-residue stretch at 2 to 114 (RLLVVGKLNG…LIAAVLAAVT (113 aa)) folds into the Response regulatory domain. A Sigma-54 factor interaction domain is found at 120–349 (MVVRDPAMEQ…LENAMHRAVL (230 aa)). ATP is bound by residues 148 to 155 (GESGSGKE) and 211 to 220 (ADGGTLLLDE). Positions 416–435 (RTHAANILGISIRTLRNKLK) form a DNA-binding region, H-T-H motif.

The protein localises to the cytoplasm. Its function is as follows. Activation of sigma-54-dependent flagellar gene promoters and strong negative autoregulatory effects on its own promoter. The synthesis and function of FlbD in C.crescentus is controlled by an internal cell-cycle clock. The sequence is that of Transcriptional regulatory protein FlbD (flbD) from Caulobacter vibrioides (strain ATCC 19089 / CIP 103742 / CB 15) (Caulobacter crescentus).